The chain runs to 227 residues: Lysosomal-associated transmembrane protein 4B (227 aa).

4 helical membrane-spanning segments follow: residues 26–46 (ILLG…LLSA), 72–92 (MCIA…ATYG), 100–120 (WIIP…LVAI), and 153–173 (CLVL…GYLI). The tract at residues 205–222 (PPYDDATAVPSTAKEPPP) is required for NEDD4 interaction.

Belongs to the LAPTM4/LAPTM5 transporter family. Homooligomer; upon reaching the lysosomes. Interacts with MCOLN1. Interacts with NEDD4; may play a role in the lysosomal sorting of LAPTM4B; enhances HGS association with NEDD4; mediates inhibition of EGFR degradation. Interacts with PIP5K1C; promotes SNX5 association with LAPTM4B; kinase activity of PIP5K1C is required; interaction is regulated by phosphatidylinositol 4,5-bisphosphate generated by PIP5K1C. Interacts with HGS; promotes HGS ubiquitination. Interacts with SNX5. Interacts with SLC3A2 and SLC7A5; recruits SLC3A2 and SLC7A5 to lysosomes to promote leucine uptake into these organelles and is required for mTORC1 activation. Interacts with LRRC32; decreases TGFB1 production in regulatory T cells. Interacts with BECN1; competes with EGFR for LAPTM4B binding; regulates EGFR activity. Interacts with EGFR; positively correlates with EGFR activation. Post-translationally, undergoes proteolytic cleavage following delivery to the lysosomes. Ubiquitinated by NEDD4.

Its subcellular location is the endomembrane system. The protein resides in the late endosome membrane. The protein localises to the cell membrane. It is found in the cell projection. It localises to the lysosome membrane. Its subcellular location is the endosome membrane. The protein resides in the endosome. The protein localises to the multivesicular body membrane. It is found in the multivesicular body lumen. Its function is as follows. Required for optimal lysosomal function. Blocks EGF-stimulated EGFR intraluminal sorting and degradation. Conversely by binding with the phosphatidylinositol 4,5-bisphosphate, regulates its PIP5K1C interaction, inhibits HGS ubiquitination and relieves LAPTM4B inhibition of EGFR degradation. Recruits SLC3A2 and SLC7A5 (the Leu transporter) to the lysosome, promoting entry of leucine and other essential amino acid (EAA) into the lysosome, stimulating activation of proton-transporting vacuolar (V)-ATPase protein pump (V-ATPase) and hence mTORC1 activation. Plays a role as negative regulator of TGFB1 production in regulatory T cells. Binds ceramide and facilitates its exit from late endosome in order to control cell death pathways. The chain is Lysosomal-associated transmembrane protein 4B from Mus musculus (Mouse).